The chain runs to 81 residues: uncharacterized protein (81 aa).

The protein belongs to the ycf70 family.

The protein localises to the plastid. It is found in the chloroplast. This is an uncharacterized protein from Saccharum officinarum (Sugarcane).